We begin with the raw amino-acid sequence, 143 residues long: Large ribosomal subunit protein uL11 (143 aa).

This sequence belongs to the universal ribosomal protein uL11 family. In terms of assembly, part of the ribosomal stalk of the 50S ribosomal subunit. Interacts with L10 and the large rRNA to form the base of the stalk. L10 forms an elongated spine to which L12 dimers bind in a sequential fashion forming a multimeric L10(L12)X complex. Post-translationally, one or more lysine residues are methylated.

Functionally, forms part of the ribosomal stalk which helps the ribosome interact with GTP-bound translation factors. The protein is Large ribosomal subunit protein uL11 of Sphingopyxis alaskensis (strain DSM 13593 / LMG 18877 / RB2256) (Sphingomonas alaskensis).